The chain runs to 481 residues: uncharacterized protein (481 aa).

The next 10 membrane-spanning stretches (helical) occupy residues 32–52 (LSWLFMFICAGLGSSTLYWGV), 82–102 (FFHWGISAWATYTLASLIMAY), 137–157 (MFLIATVGALTISLVVTAATF), 173–193 (VQAFVILLSGGIFCLSSWIGI), 204–224 (VGWGAFLLPLLVLIVGPTEFI), 258–278 (WTVFYWLWWISYTPGVAMFVT), 289–309 (VIWGLILGSTVGCWFFFGVME), 348–368 (LFLAAYLGVMIIFLASHMDAV), 392–412 (LFWCVVITLIPLSILFTGASL), and 418–438 (TVVLTALPFLVILLVKVGGFI).

It belongs to the BCCT transporter (TC 2.A.15) family.

The protein resides in the cell inner membrane. Probable transporter whose substrate is unknown. Is not involved in aerobic D-malate transport. This is an uncharacterized protein from Escherichia coli (strain K12).